A 468-amino-acid polypeptide reads, in one-letter code: Glutamate--tRNA ligase 2 (468 aa).

A 'HIGH' region motif is present at residues 13–23 (PSPTGYLHIGG). Positions 241–245 (KLSKR) match the 'KMSKS' region motif. Lysine 244 is a binding site for ATP.

This sequence belongs to the class-I aminoacyl-tRNA synthetase family. Glutamate--tRNA ligase type 1 subfamily. In terms of assembly, monomer.

The protein resides in the cytoplasm. It carries out the reaction tRNA(Glu) + L-glutamate + ATP = L-glutamyl-tRNA(Glu) + AMP + diphosphate. Functionally, catalyzes the attachment of glutamate to tRNA(Glu) in a two-step reaction: glutamate is first activated by ATP to form Glu-AMP and then transferred to the acceptor end of tRNA(Glu). This Paracoccus denitrificans (strain Pd 1222) protein is Glutamate--tRNA ligase 2.